We begin with the raw amino-acid sequence, 529 residues long: Methionine--tRNA ligase (529 aa).

The 'HIGH' region signature appears at 12–22 (YYVNALPHIGS). Positions 127, 130, 145, and 148 each coordinate Zn(2+). Residues 301 to 305 (KMGKS) carry the 'KMSKS' region motif. Lysine 304 lines the ATP pocket.

Belongs to the class-I aminoacyl-tRNA synthetase family. MetG type 2A subfamily. In terms of assembly, monomer. Requires Zn(2+) as cofactor.

It localises to the cytoplasm. It catalyses the reaction tRNA(Met) + L-methionine + ATP = L-methionyl-tRNA(Met) + AMP + diphosphate. Functionally, is required not only for elongation of protein synthesis but also for the initiation of all mRNA translation through initiator tRNA(fMet) aminoacylation. The sequence is that of Methionine--tRNA ligase from Thermosynechococcus vestitus (strain NIES-2133 / IAM M-273 / BP-1).